A 128-amino-acid polypeptide reads, in one-letter code: MNYTILVTGPPYGTQNSSTAFLFCQSLLKTKHILHSVFFYCDGVLNANNMTTPAIDEFNLINAWQGLNKKHQVKLYVCNSAALRRGVIEDEKLFNMNVKKGNLALSFQLSGLIELAKSIKICDRIIQF.

Cysteine 78 (cysteine persulfide intermediate) is an active-site residue.

It belongs to the DsrE/TusD family. Heterohexamer, formed by a dimer of trimers. The hexameric TusBCD complex contains 2 copies each of TusB, TusC and TusD. The TusBCD complex interacts with TusE.

It localises to the cytoplasm. Its function is as follows. Part of a sulfur-relay system required for 2-thiolation of 5-methylaminomethyl-2-thiouridine (mnm(5)s(2)U) at tRNA wobble positions. Accepts sulfur from TusA and transfers it in turn to TusE. This chain is Sulfurtransferase TusD, found in Buchnera aphidicola subsp. Acyrthosiphon pisum (strain 5A).